The following is a 256-amino-acid chain: Distal membrane-arm assembly complex protein 2 (256 aa).

At serine 252 the chain carries Phosphoserine.

It belongs to the ATP synthase subunit s family. As to quaternary structure, interacts with incompletely assembled mitochondrial NADH:ubiquinone oxidoreductase complex (complex I).

The protein localises to the mitochondrion. In terms of biological role, required for the assembly of the mitochondrial NADH:ubiquinone oxidoreductase complex (complex I). Involved in the assembly of the distal region of complex I. The polypeptide is Distal membrane-arm assembly complex protein 2 (Macaca fascicularis (Crab-eating macaque)).